We begin with the raw amino-acid sequence, 355 residues long: Zinc finger protein CONSTANS-LIKE 1 (355 aa).

Positions 12, 15, 35, 40, 55, 58, 78, and 83 each coordinate Zn(2+). The B box-type 1; atypical zinc finger occupies Cys12–Val54. The B box-type 2; atypical zinc finger occupies Cys55–Ile97. A compositionally biased stretch (polar residues) spans Glu252 to Arg264. The interval Glu252–Leu281 is disordered. The 43-residue stretch at Arg286–Lys328 folds into the CCT domain.

This sequence belongs to the CONSTANS family. As to expression, highly expressed in leaves and at lower levels in stems, flowers and siliques. Not detected in roots.

The protein resides in the nucleus. Its function is as follows. Putative transcription factor that may be involved in the light input to the circadian clock but does not affect flowering time. This chain is Zinc finger protein CONSTANS-LIKE 1 (COL1), found in Arabidopsis thaliana (Mouse-ear cress).